The chain runs to 826 residues: Putative ankyrin repeat protein RBE_0220 (826 aa).

ANK repeat units follow at residues 308-337 (LGTS…DQHA), 342-371 (IDMS…DPNY), 375-404 (DNDT…DPNK), 445-474 (NDFT…DVNA), 478-507 (DGFT…NPDV), 512-541 (TKSS…NPNL), 545-574 (DGTT…DINK), and 578-607 (NGDN…DLKK).

The chain is Putative ankyrin repeat protein RBE_0220 from Rickettsia bellii (strain RML369-C).